We begin with the raw amino-acid sequence, 2898 residues long: Papilin (2898 aa).

Residues 1–26 (MDLSRRLCSTALVAFIVLASIHDSQS) form the signal peptide. Positions 43-67 (LPESSVTPGGEGNDPDEWTPWSSPS) are disordered. In terms of domain architecture, TSP type-1 1 spans 57-111 (PDEWTPWSSPSDCSRTCGGGVSYQTRECLRRDDRGEAVCSGGSRRYFSCNTQDCP). Intrachain disulfides connect cysteine 69–cysteine 105, cysteine 73–cysteine 110, and cysteine 84–cysteine 95. Asparagine 258 and asparagine 319 each carry an N-linked (GlcNAc...) asparagine glycan. Residues 338 to 397 (DTHTWTHHQFNACSASCGGGSQSRKVTCNNRITLAEVNPSLCDQKSKPVEEQACGTEPCA) form the TSP type-1 2 domain. N-linked (GlcNAc...) asparagine glycosylation occurs at asparagine 419. 4 TSP type-1 domains span residues 461-521 (NCPK…TPCE), 522-575 (GVDW…KSPK), 576-633 (CEAQ…QDCE), and 639-694 (CPGE…EACT). Disulfide bonds link cysteine 462-cysteine 504, cysteine 473-cysteine 515, and cysteine 477-cysteine 520. Asparagine 669 carries an N-linked (GlcNAc...) asparagine glycan. Disordered regions lie at residues 699–1252 (LPLT…CAKS) and 1323–1367 (GEND…PDTK). Acidic residues-rich tracts occupy residues 708–720 (IEDDEEDCDEDGI) and 727–738 (LSDDEKSEDVID). Over residues 768-788 (STGTTFEGSGYDSESTTDSGI) the composition is skewed to polar residues. Residues 801–879 (EASTDLSSST…ASASESTDVS (79 aa)) show a composition bias toward low complexity. Asparagine 889, asparagine 914, asparagine 917, asparagine 950, and asparagine 1064 each carry an N-linked (GlcNAc...) asparagine glycan. Low complexity predominate over residues 890 to 1053 (ASDSTPESST…SDNTDITTDG (164 aa)). Positions 1064 to 1073 (NASTEGSTEG) are enriched in polar residues. 2 stretches are compositionally biased toward low complexity: residues 1076-1091 (EDTTISTESSGSTEST) and 1104-1215 (STVE…IWST). Basic residues predominate over residues 1237 to 1248 (SKPRKCKPKKST). Positions 1330–1351 (PETTTVPPTTTTEETQPETTTE) are enriched in low complexity. Asparagine 1489 and asparagine 1623 each carry an N-linked (GlcNAc...) asparagine glycan. 15 cysteine pairs are disulfide-bonded: cysteine 1612-cysteine 1662, cysteine 1621-cysteine 1645, cysteine 1637-cysteine 1658, cysteine 1671-cysteine 1721, cysteine 1680-cysteine 1704, cysteine 1696-cysteine 1717, cysteine 1730-cysteine 1780, cysteine 1739-cysteine 1763, cysteine 1755-cysteine 1776, cysteine 1790-cysteine 1840, cysteine 1799-cysteine 1823, cysteine 1815-cysteine 1836, cysteine 1849-cysteine 1899, cysteine 1858-cysteine 1882, and cysteine 1874-cysteine 1895. BPTI/Kunitz inhibitor domains follow at residues 1612–1662 (CGLP…KDTC), 1671–1721 (CLLP…QGTC), 1730–1780 (CEQP…NYNC), 1790–1840 (CALP…EDHC), and 1849–1899 (CEIP…LARC). N-linked (GlcNAc...) asparagine glycosylation occurs at asparagine 1750. The disordered stretch occupies residues 1902–1928 (KPEPTTTTPATRPQPSRQDVCDEEPAP). The span at 1905-1916 (PTTTTPATRPQP) shows a compositional bias: low complexity. 3 cysteine pairs are disulfide-bonded: cysteine 1922-cysteine 1972, cysteine 1931-cysteine 1955, and cysteine 1947-cysteine 1968. Residues 1922-1972 (CDEEPAPGECSTWVLKWHFDRKIGACRQFYYGNCGGNGNRFETENDCQQRC) enclose the BPTI/Kunitz inhibitor 6 domain. The segment at 1972-2004 (CLSQEPPAPTPPRAPAPTRQPDPAPTVAQCSQP) is disordered. Residues 1977 to 1995 (PPAPTPPRAPAPTRQPDPA) show a composition bias toward pro residues. 18 disulfides stabilise this stretch: cysteine 2001/cysteine 2051, cysteine 2010/cysteine 2034, cysteine 2026/cysteine 2047, cysteine 2071/cysteine 2121, cysteine 2080/cysteine 2104, cysteine 2096/cysteine 2117, cysteine 2128/cysteine 2178, cysteine 2137/cysteine 2161, cysteine 2153/cysteine 2174, cysteine 2194/cysteine 2244, cysteine 2203/cysteine 2227, cysteine 2219/cysteine 2240, cysteine 2253/cysteine 2303, cysteine 2262/cysteine 2286, cysteine 2278/cysteine 2299, cysteine 2318/cysteine 2371, cysteine 2327/cysteine 2354, and cysteine 2346/cysteine 2367. BPTI/Kunitz inhibitor domains lie at 2001–2051 (CSQP…SARC), 2071–2121 (CFLA…QNEC), 2128–2178 (CALP…LNFC), 2194–2244 (CAEP…ERQC), 2253–2303 (CNEP…QTVC), and 2318–2371 (CLLP…TNQC). Asparagine 2020 carries N-linked (GlcNAc...) asparagine glycosylation. Asparagine 2083 is a glycosylation site (N-linked (GlcNAc...) asparagine). The N-linked (GlcNAc...) asparagine glycan is linked to asparagine 2205. Positions 2452-2498 (DIYKPGECPALSANASGCARECYTDADCRGDNKCCSDGCGQLCVHPA) constitute a WAP domain. N-linked (GlcNAc...) asparagine glycans are attached at residues asparagine 2465, asparagine 2552, and asparagine 2625. Ig-like C2-type domains are found at residues 2523–2607 (PKEA…REVA), 2617–2697 (PAYI…RPVS), and 2749–2840 (PTVN…ANVS). Residues cysteine 2543 and cysteine 2592 are joined by a disulfide bond. Intrachain disulfides connect cysteine 2640–cysteine 2687 and cysteine 2775–cysteine 2824. Asparagine 2784 and asparagine 2838 each carry an N-linked (GlcNAc...) asparagine glycan. In terms of domain architecture, PLAC spans 2847 to 2886 (VSPECVDNPYFANCKLIVKGRYCSNPYYTQFCCRSCTLAG).

The protein belongs to the papilin family. As to quaternary structure, homooligomer; disulfide-linked. Post-translationally, N-glycosylated. Sulfated. In terms of tissue distribution, during embryogenesis it first appears in the extracellular matrix during gastrulation and early mesoderm development at sites where basement membranes do not subsequently form. Later, migrating hemocytes prominently produce it together with other ECM components, in basement membranes that underlie epithelia and envelop muscles and emerging organs. At various life stages, it can be synthesized by other cells, such as those of the fat body, and it also occurs in a few, circumscribed regions of relatively amorphous ECM. Isoform E is specifically expressed in ECM of heart and proventriculus. Isoform C is a major component of transitory ECM deposit in the early embryo. Isoform F is a major component of the basement membrane during embryogenesis.

The protein localises to the secreted. It localises to the extracellular space. It is found in the extracellular matrix. The protein resides in the basement membrane. In terms of biological role, essential extracellular matrix (ECM) protein that influences cell rearrangements. May act by modulating metalloproteinases action during organogenesis. Able to non-competitively inhibit procollagen N-proteinase, an ADAMTS metalloproteinase. The chain is Papilin (Ppn) from Drosophila melanogaster (Fruit fly).